A 1275-amino-acid chain; its full sequence is Surfactin synthase subunit 3 (1275 aa).

One can recognise a Carrier domain in the interval 968–1043 (GPRNEMEETI…GISAYLKNGG (76 aa)). The residue at position 1003 (Ser1003) is an O-(pantetheine 4'-phosphoryl)serine. The thioesterase stretch occupies residues 1059 to 1271 (QIIFAFPPVL…ILLEFLNTQT (213 aa)). Residues Ser1120, Asp1147, and His1247 contribute to the active site.

It belongs to the ATP-dependent AMP-binding enzyme family. Pantetheine 4'-phosphate serves as cofactor.

Its pathway is antibiotic biosynthesis; surfactin biosynthesis. In terms of biological role, probably activates a leucine. This chain is Surfactin synthase subunit 3 (srfAC), found in Bacillus subtilis (strain 168).